The primary structure comprises 108 residues: U-scoloptoxin(16)-Er10a (108 aa).

The N-terminal stretch at 1-24 (MASFTSFCVLFTFCLLLLAHQARS) is a signal peptide.

This sequence belongs to the scoloptoxin-16 family. In terms of processing, contains 4 disulfide bonds. As to expression, expressed by the venom gland.

The protein resides in the secreted. The sequence is that of U-scoloptoxin(16)-Er10a from Ethmostigmus rubripes (Giant centipede).